A 144-amino-acid polypeptide reads, in one-letter code: Eukaryotic translation initiation factor 1A (144 aa).

The span at 1 to 15 shows a compositional bias: basic residues; it reads MPKNKGKGGKNRKRG. Disordered regions lie at residues 1–25 and 120–144; these read MPKNKGKGGKNRKRGKNEADDDKRE and DVDGPEEGEGDSDYIQFEDEDIDKI. Residues 16-25 are compositionally biased toward basic and acidic residues; the sequence is KNEADDDKRE. An S1-like domain is found at 22–96; sequence DKRELVFKED…DKADVILKYM (75 aa).

Belongs to the eIF-1A family.

Seems to be required for maximal rate of protein biosynthesis. Enhances ribosome dissociation into subunits and stabilizes the binding of the initiator Met-tRNA(I) to 40 S ribosomal subunits. The chain is Eukaryotic translation initiation factor 1A from Triticum aestivum (Wheat).